The primary structure comprises 96 residues: Antitoxin TacA3 (96 aa).

The segment at Y61–K96 is neutralization domain.

Belongs to the TacA antitoxin family. As to quaternary structure, forms a complex with cognate toxin TacT3. Forms a 4:2 antitoxin:toxin complex with cognate toxin TacT3. Forms a 4:4 antitoxin:toxin complex with promoter DNA, where 2 TacT3 dimers bridge 2 TacA3 dimers. Only TacA3 contacts promoter DNA.

Its function is as follows. Antitoxin component of a type II toxin-antitoxin (TA) system. Counteracts the toxic effect of cognate toxin TacT3, but not TacT1 or TacT2. Plays a role in persister cell formation. The TacA3-TacT3 complex both represses and derepresses expression of its own operon. The hexameric 4:2 TacA3-TacT3 complex binds promoter DNA and represses its transcription; both subunits are required. The octomeric 4:4 TacA3-TacT3 complex derepresses the operon. The shift from hexameric to octomeric complex probably alters DNA-binding, leading to dissociation from the operator DNA and derepression. Does not bind the promoter of the TacA1-TacT1 operon. This chain is Antitoxin TacA3, found in Salmonella typhimurium (strain 14028s / SGSC 2262).